Here is a 136-residue protein sequence, read N- to C-terminus: Gonadotropin subunit beta-2 (136 aa).

An N-terminal signal peptide occupies residues 1–21 (MVCLFLGASSFIWSLAPAAAA). Intrachain disulfides connect Cys27–Cys75, Cys41–Cys90, Cys44–Cys128, Cys52–Cys106, Cys56–Cys108, and Cys111–Cys118. N-linked (GlcNAc...) asparagine glycosylation is present at Asn31.

Belongs to the glycoprotein hormones subunit beta family. In terms of assembly, heterodimer of an alpha and a beta chain.

Its subcellular location is the secreted. Involved in gametogenesis and steroidogenesis. This Fundulus heteroclitus (Killifish) protein is Gonadotropin subunit beta-2 (cgbb).